Here is a 320-residue protein sequence, read N- to C-terminus: o-succinylbenzoate synthase (320 aa).

The active-site Proton donor is the K133. Mg(2+) is bound by residues D161, E190, and D213. K235 functions as the Proton acceptor in the catalytic mechanism.

It belongs to the mandelate racemase/muconate lactonizing enzyme family. MenC type 1 subfamily. Requires a divalent metal cation as cofactor.

The enzyme catalyses (1R,6R)-6-hydroxy-2-succinyl-cyclohexa-2,4-diene-1-carboxylate = 2-succinylbenzoate + H2O. The protein operates within quinol/quinone metabolism; 1,4-dihydroxy-2-naphthoate biosynthesis; 1,4-dihydroxy-2-naphthoate from chorismate: step 4/7. Its pathway is quinol/quinone metabolism; menaquinone biosynthesis. Converts 2-succinyl-6-hydroxy-2,4-cyclohexadiene-1-carboxylate (SHCHC) to 2-succinylbenzoate (OSB). This is o-succinylbenzoate synthase from Salmonella paratyphi C (strain RKS4594).